Consider the following 191-residue polypeptide: Peptidyl-tRNA hydrolase (191 aa).

Tyr17 serves as a coordination point for tRNA. The Proton acceptor role is filled by His22. TRNA-binding residues include Tyr68, Asn70, and Asn116.

Belongs to the PTH family. As to quaternary structure, monomer.

Its subcellular location is the cytoplasm. It carries out the reaction an N-acyl-L-alpha-aminoacyl-tRNA + H2O = an N-acyl-L-amino acid + a tRNA + H(+). Its function is as follows. Hydrolyzes ribosome-free peptidyl-tRNAs (with 1 or more amino acids incorporated), which drop off the ribosome during protein synthesis, or as a result of ribosome stalling. In terms of biological role, catalyzes the release of premature peptidyl moieties from peptidyl-tRNA molecules trapped in stalled 50S ribosomal subunits, and thus maintains levels of free tRNAs and 50S ribosomes. The polypeptide is Peptidyl-tRNA hydrolase (Mycobacterium marinum (strain ATCC BAA-535 / M)).